Reading from the N-terminus, the 277-residue chain is MAVVIDGKQVAQSYRLKLKEEVARLKEERIQPKLTVILIGEDPASQSYVRGKEKAAQEIGMDSDLIRLPEETKESELLHLIERLNADASVHGILVQLPLPKHIDESKVIFAIAPEKDVDGFHPVSVGKMMIGEPTFLPCTPNGILHLVKEMNVPIAGRHVVVVGRSQIVGKPVGMLFLNESATVTYCHSKTADLGAMTRQADILIVAVGVPKLITADMVKPEAVVIDVGVNRVDGKLVGDVEFEAVKEVASMITPVPGGVGPMTITMLLHNTIEAAK.

Residues glycine 164 to serine 166, serine 189, and valine 230 each bind NADP(+).

It belongs to the tetrahydrofolate dehydrogenase/cyclohydrolase family. Homodimer.

It catalyses the reaction (6R)-5,10-methylene-5,6,7,8-tetrahydrofolate + NADP(+) = (6R)-5,10-methenyltetrahydrofolate + NADPH. The catalysed reaction is (6R)-5,10-methenyltetrahydrofolate + H2O = (6R)-10-formyltetrahydrofolate + H(+). Its pathway is one-carbon metabolism; tetrahydrofolate interconversion. Its function is as follows. Catalyzes the oxidation of 5,10-methylenetetrahydrofolate to 5,10-methenyltetrahydrofolate and then the hydrolysis of 5,10-methenyltetrahydrofolate to 10-formyltetrahydrofolate. The sequence is that of Bifunctional protein FolD from Exiguobacterium sibiricum (strain DSM 17290 / CCUG 55495 / CIP 109462 / JCM 13490 / 255-15).